A 320-amino-acid chain; its full sequence is tRNA uridine(34) hydroxylase (320 aa).

Positions 123-217 (EDEDTVILDA…YGKDPETKGQ (95 aa)) constitute a Rhodanese domain. Residue C177 is the Cysteine persulfide intermediate of the active site.

The protein belongs to the TrhO family.

It carries out the reaction uridine(34) in tRNA + AH2 + O2 = 5-hydroxyuridine(34) in tRNA + A + H2O. Catalyzes oxygen-dependent 5-hydroxyuridine (ho5U) modification at position 34 in tRNAs. This Staphylococcus haemolyticus (strain JCSC1435) protein is tRNA uridine(34) hydroxylase.